A 364-amino-acid chain; its full sequence is Dihydroorotate dehydrogenase (quinone) (364 aa).

FMN-binding positions include 61–65 (AGYDK) and Thr85. Substrate is bound at residue Lys65. 110–114 (NRLGF) provides a ligand contact to substrate. The FMN site is built by Asn139 and Asn170. Asn170 contacts substrate. Residue Ser173 is the Nucleophile of the active site. Position 175 (Asn175) interacts with substrate. FMN-binding residues include Lys215 and Ser243. 244–245 (NT) is a substrate binding site. Residues Gly266, Gly295, and 316–317 (YT) each bind FMN.

Belongs to the dihydroorotate dehydrogenase family. Type 2 subfamily. In terms of assembly, monomer. FMN serves as cofactor.

The protein resides in the cell membrane. The enzyme catalyses (S)-dihydroorotate + a quinone = orotate + a quinol. The protein operates within pyrimidine metabolism; UMP biosynthesis via de novo pathway; orotate from (S)-dihydroorotate (quinone route): step 1/1. In terms of biological role, catalyzes the conversion of dihydroorotate to orotate with quinone as electron acceptor. This is Dihydroorotate dehydrogenase (quinone) from Brucella anthropi (strain ATCC 49188 / DSM 6882 / CCUG 24695 / JCM 21032 / LMG 3331 / NBRC 15819 / NCTC 12168 / Alc 37) (Ochrobactrum anthropi).